Consider the following 425-residue polypeptide: MKIAGKWKRKAAKAPLHRGTVARHPCLIVRLPVEEQGEIEWQVRSSNGESLLSQGRGSIEQVRPALAAYPSVTFTRVLVPATDVTFYALTLPRQARRHVTQVVPFMLEDQLATEIEKLHFAVLEIHGDDGTVAVVEKNRMQRWLAQCDALGLSVDTLLPDARVLPKHQDGWSALQHDDMWLFRQPTGHAMAAESSWCGDLLKASMPLPAIYSYSAASVGGELAQYEWQEEGEWKAQPETDLFTLAATAHLPASVDLRQGDYAPDKAWQNTLLPWRGVGIAFACYLLLVVADAGWAHYQLYQQAEHWRQESVRVYRQIFPSETNVVNPRAQMQQHLQRTAAGGAGKALLDQLTPLQQLMTQNSAIKIQSLSYDGAAGEFRLALQGTSYQELEQFQQQAAAYYQVQAGEMRQENDRVEGRLTLRSQQ.

Over M1–P273 the chain is Cytoplasmic. Residues W274 to A290 traverse the membrane as a helical segment. Residues D291–Q425 lie on the Periplasmic side of the membrane.

It belongs to the GSP L family. In terms of assembly, type II secretion system is composed of four main components: the outer membrane complex, the inner membrane complex, the cytoplasmic secretion ATPase and the periplasm-spanning pseudopilus. Forms homodimers. Interacts with OutM/GspM. Interacts with OutE/GspE and OutF/GspF.

It localises to the cell inner membrane. Inner membrane component of the type II secretion system required for the energy-dependent secretion of extracellular factors such as proteases and toxins from the periplasm. Plays a role in the complex assembly and recruits OutM resulting in a stable complex in the inner membrane. Provides thus a link between the energy-providing OutE protein in the cytoplasm and the rest of the T2SS machinery. This is Type II secretion system protein L (outL) from Pectobacterium carotovorum subsp. carotovorum (Erwinia carotovora subsp. carotovora).